The sequence spans 73 residues: UPF0346 protein BLi02292/BL01432 (73 aa).

It belongs to the UPF0346 family.

The sequence is that of UPF0346 protein BLi02292/BL01432 from Bacillus licheniformis (strain ATCC 14580 / DSM 13 / JCM 2505 / CCUG 7422 / NBRC 12200 / NCIMB 9375 / NCTC 10341 / NRRL NRS-1264 / Gibson 46).